Reading from the N-terminus, the 556-residue chain is Transcription factor IIIB 70 kDa subunit (556 aa).

Residues 8-41 (SSRKCKNCGSTDFVRDISNTTNELICKVCGLVTE) form a TFIIB-type zinc finger. Zn(2+) is bound by residues Cys-12, Cys-15, Cys-33, and Cys-36. A run of 2 repeats spans residues 98-174 (LKAV…TFLK) and 193-272 (IQHF…RLNE). An interaction with TBP and with the Pol III subunit C34 region spans residues 98-272 (LKAVSYALNI…EETLQQRLNE (175 aa)). The interval 284–556 (KEFRDDETEV…DAINGLFGQK (273 aa)) is interaction with TBP. Disordered regions lie at residues 287-309 (RDDE…SFDK) and 477-501 (ADLA…QSSA). Residues 295 to 309 (EGERSAESKPPSFDK) are compositionally biased toward basic and acidic residues. Residues 486-495 (LRKKRSKRTN) show a composition bias toward basic residues.

The protein belongs to the TFIIB family. TFIIIB comprises the TATA-binding protein (TBP), the B-related factor (BRF) and a 70 kDa polypeptide.

It localises to the nucleus. In terms of biological role, general activator of RNA polymerase III transcription. Interacts with TBP. Binds to Pol III subunit C34 and to the TAU135 component of TFIIIC. The sequence is that of Transcription factor IIIB 70 kDa subunit (TDS4) from Kluyveromyces lactis (strain ATCC 8585 / CBS 2359 / DSM 70799 / NBRC 1267 / NRRL Y-1140 / WM37) (Yeast).